Here is a 342-residue protein sequence, read N- to C-terminus: Heat-inducible transcription repressor HrcA (342 aa).

It belongs to the HrcA family.

Its function is as follows. Negative regulator of class I heat shock genes (grpE-dnaK-dnaJ and groELS operons). Prevents heat-shock induction of these operons. The chain is Heat-inducible transcription repressor HrcA from Dechloromonas aromatica (strain RCB).